We begin with the raw amino-acid sequence, 118 residues long: uncharacterized protein (118 aa).

It localises to the mitochondrion. This is an uncharacterized protein from Arabidopsis thaliana (Mouse-ear cress).